The sequence spans 242 residues: Type III pantothenate kinase (242 aa).

ATP is bound at residue 6-13; it reads DIGNSVAK. Substrate contacts are provided by residues tyrosine 86 and 93–96; that span reads GMDR. Catalysis depends on aspartate 95, which acts as the Proton acceptor. Aspartate 116 contributes to the K(+) binding site. Residue threonine 119 coordinates ATP. A substrate-binding site is contributed by threonine 171.

Belongs to the type III pantothenate kinase family. In terms of assembly, homodimer. It depends on NH4(+) as a cofactor. K(+) is required as a cofactor.

Its subcellular location is the cytoplasm. It carries out the reaction (R)-pantothenate + ATP = (R)-4'-phosphopantothenate + ADP + H(+). It functions in the pathway cofactor biosynthesis; coenzyme A biosynthesis; CoA from (R)-pantothenate: step 1/5. Its function is as follows. Catalyzes the phosphorylation of pantothenate (Pan), the first step in CoA biosynthesis. The chain is Type III pantothenate kinase from Phocaeicola vulgatus (strain ATCC 8482 / DSM 1447 / JCM 5826 / CCUG 4940 / NBRC 14291 / NCTC 11154) (Bacteroides vulgatus).